Reading from the N-terminus, the 332-residue chain is MIIVTGGAGMIGSAFVWKLNEMGIKDILIVDKLRKEDKWLNIRKREYYDWIDKDNLKEWLVCKENADNIEAVIHMGACSATTETDADFLMDNNFGYTKFLWNFCAEKNIKYIYASSAATYGMGELGYNDDVSPEELQKLMPLNKYGYSKKFFDDWAFKQKNQPKQWNGLKFFNVYGPQEYHKGRMASMVFHTYNQYKENGYVKLFKSYKEGFKDGEQLRDFVYVKDVVDIMYFMLVNDVKSGIYNIGTGKARSFMDLSMATMRAASHNDNLDKNEVVKLIEMPEDLQGRYQYFTEAKINKLREIGYTKEMHSLEEGVKDYVQNYLAKEDSYL.

NADP(+)-binding positions include 10 to 11 (MI), 31 to 32 (DK), Lys-38, Lys-53, 75 to 79 (MGACS), and Asn-92. Tyr-145 functions as the Proton acceptor in the catalytic mechanism. Lys-149 is an NADP(+) binding site. Asn-173 contributes to the substrate binding site. 2 residues coordinate NADP(+): Val-174 and Lys-182. Lys-182 functions as the Proton acceptor in the catalytic mechanism. Residues Arg-184, His-191, 205 to 208 (FKSY), Arg-219, and Tyr-290 each bind substrate.

Belongs to the NAD(P)-dependent epimerase/dehydratase family. HldD subfamily. In terms of assembly, homopentamer. NADP(+) is required as a cofactor.

The enzyme catalyses ADP-D-glycero-beta-D-manno-heptose = ADP-L-glycero-beta-D-manno-heptose. It participates in nucleotide-sugar biosynthesis; ADP-L-glycero-beta-D-manno-heptose biosynthesis; ADP-L-glycero-beta-D-manno-heptose from D-glycero-beta-D-manno-heptose 7-phosphate: step 4/4. Functionally, catalyzes the interconversion between ADP-D-glycero-beta-D-manno-heptose and ADP-L-glycero-beta-D-manno-heptose via an epimerization at carbon 6 of the heptose. The protein is ADP-L-glycero-D-manno-heptose-6-epimerase of Fusobacterium nucleatum subsp. nucleatum (strain ATCC 25586 / DSM 15643 / BCRC 10681 / CIP 101130 / JCM 8532 / KCTC 2640 / LMG 13131 / VPI 4355).